The primary structure comprises 366 residues: DNA double-strand break repair protein Mre11 (366 aa).

Residues Asp8, His10, Asp49, and Asn84 each contribute to the Mn(2+) site. The active-site Proton donor is the His85. Positions 158, 186, and 188 each coordinate Mn(2+).

This sequence belongs to the MRE11/RAD32 family. Homodimer. Forms a heterotetramer composed of two Mre11 subunits and two Rad50 subunits. The cofactor is Mn(2+).

With respect to regulation, nuclease activity is regulated by Rad50. Its function is as follows. Part of the Rad50/Mre11 complex, which is involved in the early steps of DNA double-strand break (DSB) repair. The complex may facilitate opening of the processed DNA ends to aid in the recruitment of HerA and NurA. Mre11 binds to DSB ends and has both double-stranded 3'-5' exonuclease activity and single-stranded endonuclease activity. The protein is DNA double-strand break repair protein Mre11 of Methanocaldococcus jannaschii (strain ATCC 43067 / DSM 2661 / JAL-1 / JCM 10045 / NBRC 100440) (Methanococcus jannaschii).